The sequence spans 184 residues: Ribosome maturation factor RimM (184 aa).

The PRC barrel domain occupies 93–165 (DEGWYEHELV…YILITPPSGL (73 aa)).

It belongs to the RimM family. In terms of assembly, binds ribosomal protein uS19.

The protein localises to the cytoplasm. An accessory protein needed during the final step in the assembly of 30S ribosomal subunit, possibly for assembly of the head region. Essential for efficient processing of 16S rRNA. May be needed both before and after RbfA during the maturation of 16S rRNA. It has affinity for free ribosomal 30S subunits but not for 70S ribosomes. This is Ribosome maturation factor RimM from Paenarthrobacter aurescens (strain TC1).